The chain runs to 185 residues: MIEASKLKAGMTFEAEGKLIRVLEASHHKPGKGNTIMRMKLRDVRTGSTFDTTYRPDETFEQAIIETVPAQYLYKMDDTAYFMNTDTYDQYEIPVANVEQELLYILENSDVKIQFYGSEVIGVTVPTTVELTVAETQPSIKGATVTGSGKPATLETGLVVNVPDFIEAGQKLIINTAEGTYVSRA.

It belongs to the elongation factor P family.

It localises to the cytoplasm. It functions in the pathway protein biosynthesis; polypeptide chain elongation. Its function is as follows. Involved in peptide bond synthesis. Stimulates efficient translation and peptide-bond synthesis on native or reconstituted 70S ribosomes in vitro. Probably functions indirectly by altering the affinity of the ribosome for aminoacyl-tRNA, thus increasing their reactivity as acceptors for peptidyl transferase. In Streptococcus pyogenes serotype M4 (strain MGAS10750), this protein is Elongation factor P.